The sequence spans 103 residues: N(4)-acetylcytidine amidohydrolase (103 aa).

Residues Ile-6–Lys-101 enclose the ASCH domain. Lys-21 serves as the catalytic Proton acceptor. Thr-24 functions as the Nucleophile in the catalytic mechanism. Catalysis depends on Glu-74, which acts as the Proton donor.

This sequence belongs to the N(4)-acetylcytidine amidohydrolase family.

It catalyses the reaction N(4)-acetylcytidine + H2O = cytidine + acetate + H(+). It carries out the reaction N(4)-acetyl-2'-deoxycytidine + H2O = 2'-deoxycytidine + acetate + H(+). The catalysed reaction is N(4)-acetylcytosine + H2O = cytosine + acetate + H(+). Catalyzes the hydrolysis of N(4)-acetylcytidine (ac4C). The polypeptide is N(4)-acetylcytidine amidohydrolase (yqfB) (Escherichia coli (strain SMS-3-5 / SECEC)).